A 300-amino-acid chain; its full sequence is 4-hydroxy-tetrahydrodipicolinate synthase (300 aa).

Threonine 45 contacts pyruvate. Tyrosine 140 acts as the Proton donor/acceptor in catalysis. Residue lysine 169 is the Schiff-base intermediate with substrate of the active site. Isoleucine 210 is a pyruvate binding site.

This sequence belongs to the DapA family. As to quaternary structure, homotetramer; dimer of dimers.

The protein localises to the cytoplasm. It carries out the reaction L-aspartate 4-semialdehyde + pyruvate = (2S,4S)-4-hydroxy-2,3,4,5-tetrahydrodipicolinate + H2O + H(+). Its pathway is amino-acid biosynthesis; L-lysine biosynthesis via DAP pathway; (S)-tetrahydrodipicolinate from L-aspartate: step 3/4. Its function is as follows. Catalyzes the condensation of (S)-aspartate-beta-semialdehyde [(S)-ASA] and pyruvate to 4-hydroxy-tetrahydrodipicolinate (HTPA). The polypeptide is 4-hydroxy-tetrahydrodipicolinate synthase (Helicobacter pylori (strain P12)).